An 88-amino-acid chain; its full sequence is UPF0298 protein BcerKBAB4_3759 (88 aa).

This sequence belongs to the UPF0298 family.

Its subcellular location is the cytoplasm. This chain is UPF0298 protein BcerKBAB4_3759, found in Bacillus mycoides (strain KBAB4) (Bacillus weihenstephanensis).